A 595-amino-acid polypeptide reads, in one-letter code: Beta-(1--&gt;2)glucan export ATP-binding/permease protein NdvA (595 aa).

5 consecutive transmembrane segments (helical) span residues 21–41 (FLLI…EPIL), 56–76 (LVTL…YVLV), 129–149 (IWLE…VLVP), 158–178 (LSIV…LVMQ), and 252–272 (ISIV…QLSV). The 281-residue stretch at 21–301 (FLLICTANIT…ISGFINLAVS (281 aa)) folds into the ABC transmembrane type-1 domain. Positions 335–569 (IQFHHVTYEF…DGHFYKLLKA (235 aa)) constitute an ABC transporter domain. 368–375 (GPTGAGKT) contacts ATP.

This sequence belongs to the ABC transporter superfamily. Beta-(1--&gt;2)glucan exporter (TC 3.A.1.108.1) family. As to quaternary structure, homodimer.

Its subcellular location is the cell inner membrane. It catalyses the reaction [(1-&gt;2)-beta-D-glucosyl](n)(in) + ATP + H2O = [(1-&gt;2)-beta-D-glucosyl](n)(out) + ADP + phosphate + H(+). In terms of biological role, involved in beta-(1--&gt;2)glucan export. Transmembrane domains (TMD) form a pore in the inner membrane and the ATP-binding domain (NBD) is responsible for energy generation. In Bartonella bacilliformis (strain ATCC 35685 / KC583 / Herrer 020/F12,63), this protein is Beta-(1--&gt;2)glucan export ATP-binding/permease protein NdvA.